The chain runs to 444 residues: Ribulose bisphosphate carboxylase (444 aa).

Lysine 163 serves as the catalytic Proton acceptor. Lysine 165 is a substrate binding site. Residues lysine 189, aspartate 191, and glutamate 192 each coordinate Mg(2+). Lysine 189 carries the N6-carboxylysine modification. The Proton acceptor role is filled by histidine 281. Substrate is bound by residues arginine 282, histidine 314, 367-369, and 389-392; these read SGG and QLGG.

It belongs to the RuBisCO large chain family. Type III subfamily. In terms of assembly, homodecamer, consisting of five dimer units which form a ring-like pentagonal structure. This arrangement is essential for its high thermostability. In contrast to form I RuBisCO, the form III RuBisCO is composed solely of large subunits. The cofactor is Mg(2+).

It catalyses the reaction 2 (2R)-3-phosphoglycerate + 2 H(+) = D-ribulose 1,5-bisphosphate + CO2 + H2O. It carries out the reaction D-ribulose 1,5-bisphosphate + O2 = 2-phosphoglycolate + (2R)-3-phosphoglycerate + 2 H(+). Its function is as follows. Catalyzes the addition of molecular CO(2) and H(2)O to ribulose 1,5-bisphosphate (RuBP), generating two molecules of 3-phosphoglycerate (3-PGA). Functions in an archaeal AMP degradation pathway, together with AMP phosphorylase and R15P isomerase. The protein is Ribulose bisphosphate carboxylase of Thermococcus kodakarensis (strain ATCC BAA-918 / JCM 12380 / KOD1) (Pyrococcus kodakaraensis (strain KOD1)).